We begin with the raw amino-acid sequence, 172 residues long: RNA silencing suppressor p19 (172 aa).

A compositionally biased stretch (basic and acidic residues) spans M1–D20. The disordered stretch occupies residues M1–S38.

It belongs to the tombusvirus protein p19 family. As to quaternary structure, homodimer.

Functionally, viral suppressor of RNA silencing which binds specifically to silencing RNAs (siRNAs). Acts as a molecular caliper to specifically select siRNAs based on the length of the duplex region of the RNA. This chain is RNA silencing suppressor p19, found in Tomato bushy stunt virus (strain type) (TBSV).